The primary structure comprises 420 residues: Serine hydroxymethyltransferase (420 aa).

Residues leucine 118 and 122 to 124 contribute to the (6S)-5,6,7,8-tetrahydrofolate site; that span reads GHL. At lysine 227 the chain carries N6-(pyridoxal phosphate)lysine.

This sequence belongs to the SHMT family. In terms of assembly, homodimer. Pyridoxal 5'-phosphate is required as a cofactor.

It is found in the cytoplasm. It carries out the reaction (6R)-5,10-methylene-5,6,7,8-tetrahydrofolate + glycine + H2O = (6S)-5,6,7,8-tetrahydrofolate + L-serine. Its pathway is one-carbon metabolism; tetrahydrofolate interconversion. It functions in the pathway amino-acid biosynthesis; glycine biosynthesis; glycine from L-serine: step 1/1. Functionally, catalyzes the reversible interconversion of serine and glycine with tetrahydrofolate (THF) serving as the one-carbon carrier. This reaction serves as the major source of one-carbon groups required for the biosynthesis of purines, thymidylate, methionine, and other important biomolecules. Also exhibits THF-independent aldolase activity toward beta-hydroxyamino acids, producing glycine and aldehydes, via a retro-aldol mechanism. The sequence is that of Serine hydroxymethyltransferase from Persephonella marina (strain DSM 14350 / EX-H1).